Reading from the N-terminus, the 203-residue chain is Cardiotrophin-1 (203 aa).

Belongs to the IL-6 superfamily. In terms of tissue distribution, highly expressed in heart, skeletal muscle, liver, lung and kidney. Lower levels in testis and brain. No expression in spleen.

The protein localises to the secreted. Functionally, induces cardiac myocyte hypertrophy in vitro. Binds to and activates the ILST/gp130 receptor. This is Cardiotrophin-1 (Ctf1) from Mus musculus (Mouse).